Consider the following 194-residue polypeptide: Putative manganese efflux pump MntP (194 aa).

A run of 6 helical transmembrane segments spans residues leucine 8 to leucine 28, methionine 36 to leucine 56, phenylalanine 61 to glycine 81, methionine 109 to isoleucine 129, proline 138 to isoleucine 158, and leucine 172 to phenylalanine 192.

This sequence belongs to the MntP (TC 9.B.29) family.

It is found in the cell inner membrane. Probably functions as a manganese efflux pump. The protein is Putative manganese efflux pump MntP of Bacteroides fragilis (strain ATCC 25285 / DSM 2151 / CCUG 4856 / JCM 11019 / LMG 10263 / NCTC 9343 / Onslow / VPI 2553 / EN-2).